Consider the following 317-residue polypeptide: Protease 7 (317 aa).

Residues 1-20 form the signal peptide; that stretch reads MRAKLLGIVLTTPIAISSFA. At 21–31 the chain is on the periplasmic side; the sequence is STETLSFTPDN. The beta stranded transmembrane segment at 32–41 threads the bilayer; that stretch reads INADISLGTL. Residues 42–69 lie on the Extracellular side of the membrane; it reads SGKTKERVYLAEEGGRKVSQLDWKFNNA. Residues 70–78 traverse the membrane as a beta stranded segment; it reads AIIKGAINW. Topologically, residues 79–83 are periplasmic; sequence DLMPQ. Residues 84–92 form a beta stranded membrane-spanning segment; it reads ISIGAAGWT. The Extracellular portion of the chain corresponds to 93-130; it reads TLGSRGGNMVDQDWMDSSNPGTWTDESRHPDTQLNYAN. Active-site residues include Asp103 and Asp105. Residues 131 to 140 form a beta stranded membrane-spanning segment; it reads EFDLNIKGWL. Over 141 to 145 the chain is Periplasmic; the sequence is LNEPN. A beta stranded membrane pass occupies residues 146–156; sequence YRLGLMAGYQE. At 157-197 the chain is on the extracellular side; it reads SRYSFTARGGSYIYSSEEGFRDDIGSFPNGERAIGYKQRFK. A beta stranded transmembrane segment spans residues 198–209; that stretch reads MPYIGLTGSYRY. At 210–211 the chain is on the periplasmic side; that stretch reads ED. The chain crosses the membrane as a beta stranded span at residues 212 to 221; the sequence is FELGGTFKYS. Topologically, residues 222–250 are extracellular; the sequence is GWVESSDNDEHYDPGKRITYRSKVKDQNY. Active-site residues include Asp230 and His232. Residues 251-261 form a beta stranded membrane-spanning segment; sequence YSVAVNAGYYV. At 262–264 the chain is on the periplasmic side; it reads TPN. A beta stranded transmembrane segment spans residues 265–274; that stretch reads AKVYVEGAWN. Residues 275 to 306 are Extracellular-facing; sequence RVTNKKGNTSLYDHNNNTSDYSKNGAGIENYN. The beta stranded transmembrane segment at 307-316 threads the bilayer; sequence FITTAGLKYT. A topological domain (periplasmic) is located at residue Phe317.

The protein belongs to the peptidase A26 family. In terms of assembly, homopentamer.

The protein resides in the cell outer membrane. The enzyme catalyses Has a virtual requirement for Arg in the P1 position and a slightly less stringent preference for this residue in the P1' position, which can also contain Lys, Gly or Val.. With respect to regulation, inhibited by zinc. Functionally, protease that can cleave T7 RNA polymerase, ferric enterobactin receptor protein (FEP), antimicrobial peptide protamine and other proteins. This protease has a specificity for paired basic residues. In Escherichia coli (strain K12), this protein is Protease 7 (ompT).